Reading from the N-terminus, the 715-residue chain is Ribosomal RNA large subunit methyltransferase K/L (715 aa).

The THUMP domain occupies 47-158 (LGYKISLWTR…RDNVTIFLDF (112 aa)).

The protein belongs to the methyltransferase superfamily. RlmKL family.

It is found in the cytoplasm. It catalyses the reaction guanosine(2445) in 23S rRNA + S-adenosyl-L-methionine = N(2)-methylguanosine(2445) in 23S rRNA + S-adenosyl-L-homocysteine + H(+). The enzyme catalyses guanosine(2069) in 23S rRNA + S-adenosyl-L-methionine = N(2)-methylguanosine(2069) in 23S rRNA + S-adenosyl-L-homocysteine + H(+). Specifically methylates the guanine in position 2445 (m2G2445) and the guanine in position 2069 (m7G2069) of 23S rRNA. The protein is Ribosomal RNA large subunit methyltransferase K/L of Colwellia psychrerythraea (strain 34H / ATCC BAA-681) (Vibrio psychroerythus).